A 215-amino-acid polypeptide reads, in one-letter code: 3-demethoxyubiquinol 3-hydroxylase (215 aa).

Fe cation is bound by residues E64, E94, H97, E146, E178, and H181.

Belongs to the COQ7 family. Fe cation is required as a cofactor.

The protein resides in the cell membrane. The enzyme catalyses a 5-methoxy-2-methyl-3-(all-trans-polyprenyl)benzene-1,4-diol + AH2 + O2 = a 3-demethylubiquinol + A + H2O. It participates in cofactor biosynthesis; ubiquinone biosynthesis. Its function is as follows. Catalyzes the hydroxylation of 2-nonaprenyl-3-methyl-6-methoxy-1,4-benzoquinol during ubiquinone biosynthesis. This is 3-demethoxyubiquinol 3-hydroxylase from Pseudomonas fluorescens (strain Pf0-1).